A 671-amino-acid chain; its full sequence is DNA ligase (671 aa).

Residues 32–36 (DAEYD), 81–82 (SL), and Glu-113 each bind NAD(+). The active-site N6-AMP-lysine intermediate is the Lys-115. Positions 136, 173, 290, and 314 each coordinate NAD(+). Zn(2+)-binding residues include Cys-408, Cys-411, Cys-426, and Cys-432. In terms of domain architecture, BRCT spans 593-671 (EIDSPFAGKT…ETEMLRLLGS (79 aa)).

Belongs to the NAD-dependent DNA ligase family. LigA subfamily. The cofactor is Mg(2+). Requires Mn(2+) as cofactor.

It catalyses the reaction NAD(+) + (deoxyribonucleotide)n-3'-hydroxyl + 5'-phospho-(deoxyribonucleotide)m = (deoxyribonucleotide)n+m + AMP + beta-nicotinamide D-nucleotide.. In terms of biological role, DNA ligase that catalyzes the formation of phosphodiester linkages between 5'-phosphoryl and 3'-hydroxyl groups in double-stranded DNA using NAD as a coenzyme and as the energy source for the reaction. It is essential for DNA replication and repair of damaged DNA. This is DNA ligase from Escherichia coli O6:H1 (strain CFT073 / ATCC 700928 / UPEC).